Reading from the N-terminus, the 162-residue chain is Anaerobic nitrite reductase GLB1 (162 aa).

The region spanning 9–159 (VFSEEKEALV…LVAAIKQEMK (151 aa)) is the Globin domain. The short motif at 42–46 (EIAPS) is the Homodimerization element. Positions 66, 70, 100, 104, and 105 each coordinate heme b. The Homodimerization signature appears at 112–124 (DGHFEVTRFALLE).

This sequence belongs to the plant globin family. In terms of assembly, homodimer. It depends on heme b as a cofactor. In terms of tissue distribution, seeds and roots.

Its subcellular location is the cytoplasm. The protein resides in the nucleus. It catalyses the reaction Fe(III)-heme b-[protein] + nitric oxide + H2O = Fe(II)-heme b-[protein] + nitrite + 2 H(+). Functionally, phytoglobin that reduces nitrite to nitric oxide (NO) under anoxic conditions (e.g. during flooding or in waterlogged soil). May not function as an oxygen storage or transport protein. Has an unusually high affinity for O(2) through an hexacoordinate heme iron because of a very low dissociation constant. The sequence is that of Anaerobic nitrite reductase GLB1 from Hordeum vulgare (Barley).